The primary structure comprises 373 residues: Queuine tRNA-ribosyltransferase (373 aa).

Asp-89 functions as the Proton acceptor in the catalytic mechanism. Substrate is bound by residues Asp-89–Phe-93, Asp-143, Gln-187, and Gly-214. An RNA binding region spans residues Gly-245–Asp-251. Asp-264 functions as the Nucleophile in the catalytic mechanism. Residues Thr-269 to Arg-273 form an RNA binding; important for wobble base 34 recognition region. Residues Cys-302, Cys-304, Cys-307, and His-333 each coordinate Zn(2+).

This sequence belongs to the queuine tRNA-ribosyltransferase family. Homodimer. Within each dimer, one monomer is responsible for RNA recognition and catalysis, while the other monomer binds to the replacement base PreQ1. Requires Zn(2+) as cofactor.

The catalysed reaction is 7-aminomethyl-7-carbaguanine + guanosine(34) in tRNA = 7-aminomethyl-7-carbaguanosine(34) in tRNA + guanine. Its pathway is tRNA modification; tRNA-queuosine biosynthesis. In terms of biological role, catalyzes the base-exchange of a guanine (G) residue with the queuine precursor 7-aminomethyl-7-deazaguanine (PreQ1) at position 34 (anticodon wobble position) in tRNAs with GU(N) anticodons (tRNA-Asp, -Asn, -His and -Tyr). Catalysis occurs through a double-displacement mechanism. The nucleophile active site attacks the C1' of nucleotide 34 to detach the guanine base from the RNA, forming a covalent enzyme-RNA intermediate. The proton acceptor active site deprotonates the incoming PreQ1, allowing a nucleophilic attack on the C1' of the ribose to form the product. After dissociation, two additional enzymatic reactions on the tRNA convert PreQ1 to queuine (Q), resulting in the hypermodified nucleoside queuosine (7-(((4,5-cis-dihydroxy-2-cyclopenten-1-yl)amino)methyl)-7-deazaguanosine). This is Queuine tRNA-ribosyltransferase from Tolumonas auensis (strain DSM 9187 / NBRC 110442 / TA 4).